A 401-amino-acid polypeptide reads, in one-letter code: O-antigen ligase (401 aa).

Residues 1–20 (MFAATRLSRLRHDTSRILSH) are Cytoplasmic-facing. The helical transmembrane segment at 21-37 (WILPLGWLALLTGMFWV) threads the bilayer. The Periplasmic segment spans residues 38-42 (GDRSD). A helical membrane pass occupies residues 43-61 (YHRLFYILLAAPTLLYVIL). Residues 62–72 (QPRLLRPLTGS) lie on the Cytoplasmic side of the membrane. The chain crosses the membrane as a helical span at residues 73-92 (PLFIAFLAFSSYMMLSLSWS). Residues 93–103 (TPENSTGSLLK) lie on the Periplasmic side of the membrane. The helical transmembrane segment at 104–122 (RPLYIALLFFCAAILALEA) threads the bilayer. The Cytoplasmic portion of the chain corresponds to 123–129 (PLRLKTA). A helical transmembrane segment spans residues 130–150 (TWLAALGAVISAAATLLRYYW). Residues 151–161 (DANPLRLTGYG) are Periplasmic-facing. A helical membrane pass occupies residues 162–183 (ALYNPLLSAHVYGAFTALWLAY). Residues 184–189 (WMQSRP) are Cytoplasmic-facing. Residues 190–208 (ILAPLPLISLALLGGLLIA) form a helical membrane-spanning segment. Topologically, residues 209-212 (TGSR) are periplasmic. Residues 213–229 (TPLVGLTAALMWLVLAG) form a helical membrane-spanning segment. The Cytoplasmic portion of the chain corresponds to 230–234 (DRKKA). A helical transmembrane segment spans residues 235–252 (LIALALALAGALLGYILY). Residues 253–306 (PEVITQRGASFRPEIWADALRQISEHPWLGHGYDHPMRIVLSNGMLLADPHNIE) are Periplasmic-facing. The tract at residues 258-319 (QRGASFRPEI…LFAGGIIGLL (62 aa)) is WZY-C. A helical membrane pass occupies residues 307–331 (LGVLFAGGIIGLLLWVAIYALAFGF). Topologically, residues 332-339 (SWKNRKSP) are cytoplasmic. The chain crosses the membrane as a helical span at residues 340–357 (AVLLASTWLVFGLAAGLT). Residues 358–368 (EGNAFLPRPKE) are Periplasmic-facing. A helical transmembrane segment spans residues 369–385 (HWFLIWIPMALLYALWI). Residues 386 to 401 (QQRFAASRRGEDIAAP) lie on the Cytoplasmic side of the membrane.

Belongs to the O-antigen ligase family. Homodimer.

It is found in the cell inner membrane. It carries out the reaction a lipid-linked O antigen + a lipid A-core oligosaccharide = a lipopolysaccharide + a polyisoprenyl diphosphate.. It functions in the pathway bacterial outer membrane biogenesis; lipopolysaccharide biosynthesis. Its activity is regulated as follows. Activity does not require ATP and magnesium ions. Transferase involved in the biosynthesis of the lipopolysaccharide (LPS). Catalyzes the transfer of a polymerized O-antigen molecule from its polyprenyl diphosphate membrane anchor to a terminal sugar of the lipid A-core oligosaccharide, finalizing the biosynthesis of the lipopolysaccharide. Required for the attachment of both A-band and B-band O-antigens, two forms of O-antigen produced by P.aeruginosa, onto the lipid A-core receptors. Important for cell wall integrity and motility of the bacteria. This is O-antigen ligase from Pseudomonas aeruginosa (strain ATCC 15692 / DSM 22644 / CIP 104116 / JCM 14847 / LMG 12228 / 1C / PRS 101 / PAO1).